We begin with the raw amino-acid sequence, 366 residues long: Phospho-N-acetylmuramoyl-pentapeptide-transferase (366 aa).

Helical transmembrane passes span 27-47 (AALF…IASL), 71-91 (TPTM…LLWA), 93-113 (LSSI…AIGF), 138-158 (FVIA…AGAA), 174-194 (LMLN…VGAG), 205-225 (GLAI…AYLA), 245-265 (LAVI…FNAP), 268-288 (AIFM…TVAV), 297-317 (IIIG…VFWF), and 343-363 (QVVI…LSTL).

This sequence belongs to the glycosyltransferase 4 family. MraY subfamily. Requires Mg(2+) as cofactor.

It is found in the cell inner membrane. It catalyses the reaction UDP-N-acetyl-alpha-D-muramoyl-L-alanyl-gamma-D-glutamyl-meso-2,6-diaminopimeloyl-D-alanyl-D-alanine + di-trans,octa-cis-undecaprenyl phosphate = di-trans,octa-cis-undecaprenyl diphospho-N-acetyl-alpha-D-muramoyl-L-alanyl-D-glutamyl-meso-2,6-diaminopimeloyl-D-alanyl-D-alanine + UMP. It functions in the pathway cell wall biogenesis; peptidoglycan biosynthesis. Its function is as follows. Catalyzes the initial step of the lipid cycle reactions in the biosynthesis of the cell wall peptidoglycan: transfers peptidoglycan precursor phospho-MurNAc-pentapeptide from UDP-MurNAc-pentapeptide onto the lipid carrier undecaprenyl phosphate, yielding undecaprenyl-pyrophosphoryl-MurNAc-pentapeptide, known as lipid I. The chain is Phospho-N-acetylmuramoyl-pentapeptide-transferase from Rhizobium meliloti (strain 1021) (Ensifer meliloti).